A 598-amino-acid polypeptide reads, in one-letter code: Chaperone protein DnaK (598 aa).

The residue at position 175 (Thr-175) is a Phosphothreonine; by autocatalysis. Residues 571-591 (AKSAAASSNKDDSLNNNSSSN) show a composition bias toward low complexity. The disordered stretch occupies residues 571-598 (AKSAAASSNKDDSLNNNSSSNNDEETFE).

It belongs to the heat shock protein 70 family.

Acts as a chaperone. In Mycoplasmopsis agalactiae (strain NCTC 10123 / CIP 59.7 / PG2) (Mycoplasma agalactiae), this protein is Chaperone protein DnaK.